The following is a 416-amino-acid chain: MQPTPFSSLSSADGCWTGLRLAQGLFIPDVAVPDDALSCVVVQGGTVRWVGPVAAVPPAFAALPRHAGGGALATPGLVDCHTHLVYGGHRANEFAMRLAGASYEEVARAGGGIVSSVKATRAASEDELFAQALPRLQALLDEGVCAIEIKSGYGLALEHERKQLRAARRLGEACGVTVRTTFLGAHALPPEYAGRSQDYIDLVCREMLPALAEEGLVDAVDVFCERIAFSLAETEQVFQAAQALGLPVKLHAEQLSDMDGARLAARYGALSCDHIEHLSAEGIAAMKAAGTVAVLLPGAYYTLRDTHLPPIQALREAGVPMAVSTDHNPGTSPALSLRLMANMACTLFRLTVPEALAGITTHAARALGLQDTHGLIAAGRPADFVLWPFAEAAELAYWFGHQPPQAIVRQGRVVQR.

Residues H81 and H83 each contribute to the Fe(3+) site. The Zn(2+) site is built by H81 and H83. R90, Y153, and H186 together coordinate 4-imidazolone-5-propanoate. Position 153 (Y153) interacts with N-formimidoyl-L-glutamate. Residue H251 coordinates Fe(3+). H251 is a binding site for Zn(2+). A 4-imidazolone-5-propanoate-binding site is contributed by Q254. Position 326 (D326) interacts with Fe(3+). Position 326 (D326) interacts with Zn(2+). N328 and G330 together coordinate N-formimidoyl-L-glutamate. T331 serves as a coordination point for 4-imidazolone-5-propanoate.

This sequence belongs to the metallo-dependent hydrolases superfamily. HutI family. It depends on Zn(2+) as a cofactor. The cofactor is Fe(3+).

Its subcellular location is the cytoplasm. The catalysed reaction is 4-imidazolone-5-propanoate + H2O = N-formimidoyl-L-glutamate. Its pathway is amino-acid degradation; L-histidine degradation into L-glutamate; N-formimidoyl-L-glutamate from L-histidine: step 3/3. Catalyzes the hydrolytic cleavage of the carbon-nitrogen bond in imidazolone-5-propanoate to yield N-formimidoyl-L-glutamate. It is the third step in the universal histidine degradation pathway. The protein is Imidazolonepropionase of Paracidovorax citrulli (strain AAC00-1) (Acidovorax citrulli).